The sequence spans 71 residues: uncharacterized protein (71 aa).

The signal sequence occupies residues 1 to 19; that stretch reads MFLFPSLLSSFCITLRSIS.

This is an uncharacterized protein from Pasteurella multocida (strain Pm70).